Here is a 424-residue protein sequence, read N- to C-terminus: Adenylosuccinate synthetase (424 aa).

Residues 12 to 18 and 40 to 42 each bind GTP; these read GDEGKGK and GHT. D13 (proton acceptor) is an active-site residue. Mg(2+) contacts are provided by D13 and G40. Residues 13 to 16, 38 to 41, T130, R144, N220, T235, and R299 contribute to the IMP site; these read DEGK and NAGH. H41 (proton donor) is an active-site residue. Position 295–301 (295–301) interacts with substrate; the sequence is VTTGRRR. Residues R301, 327 to 329, and 412 to 414 each bind GTP; these read KLD and GTG.

It belongs to the adenylosuccinate synthetase family. Homodimer. Mg(2+) serves as cofactor.

It is found in the cytoplasm. The enzyme catalyses IMP + L-aspartate + GTP = N(6)-(1,2-dicarboxyethyl)-AMP + GDP + phosphate + 2 H(+). Its pathway is purine metabolism; AMP biosynthesis via de novo pathway; AMP from IMP: step 1/2. Its function is as follows. Plays an important role in the de novo pathway and in the salvage pathway of purine nucleotide biosynthesis. Catalyzes the first committed step in the biosynthesis of AMP from IMP. In Aspergillus niger (strain ATCC MYA-4892 / CBS 513.88 / FGSC A1513), this protein is Adenylosuccinate synthetase.